A 365-amino-acid polypeptide reads, in one-letter code: MNVIYPLAVPKGRRLCCEVCEAPAERVCAACTVTYYCGVVHQKADWDSIHEKICQLLIPLRTSMPFYNSEEERQHGLQQLQQRQKYLIEFCYTIAQKYLFEGKHEDAVPAALQSLRFRVKLYGLSSVELVPAYLLLAEASLGLGRIVQAEEYLFQAQWTVLKSTDCSNATHSLLHRNLGLLYIAKKNYEEARYHLANDIYFASCAFGTEDIRTSGGYFHLANIFYDLKKLDLADTLYTKVSEIWHAYLNNHYQVLSQAHIQQMDLLGKLFENDTGLDEAQEAEAIRILTSILNIRESTSDKAPQKTIFVLKILVMFYYLMMNSSKAQEYGMRALSLAKEQQLDVHEQSTIQELLSLISTEDHPIT.

Zn(2+) contacts are provided by Cys17, Cys20, Cys28, Cys31, Cys37, His41, His50, and Cys54. An MYND-type; atypical zinc finger spans residues 17–54 (CEVCEAPAERVCAACTVTYYCGVVHQKADWDSIHEKIC). 2 TPR repeats span residues 172–205 (SLLH…ASCA) and 214–247 (SGGY…WHAY).

As to expression, expressed predominantly in the testis.

The protein resides in the cell projection. The protein localises to the cilium. It localises to the flagellum. Its function is as follows. Required for sperm flagellum function and male fertility. This is Zinc finger MYND domain-containing protein 12 (ZMYND12) from Homo sapiens (Human).